A 561-amino-acid chain; its full sequence is Oxygen-dependent choline dehydrogenase (561 aa).

6-35 (DYIIIGAGSAGNVLATRLTEDADVSVLLLE) serves as a coordination point for FAD. Residue H475 is the Proton acceptor of the active site.

The protein belongs to the GMC oxidoreductase family. The cofactor is FAD.

The catalysed reaction is choline + A = betaine aldehyde + AH2. It carries out the reaction betaine aldehyde + NAD(+) + H2O = glycine betaine + NADH + 2 H(+). The protein operates within amine and polyamine biosynthesis; betaine biosynthesis via choline pathway; betaine aldehyde from choline (cytochrome c reductase route): step 1/1. In terms of biological role, involved in the biosynthesis of the osmoprotectant glycine betaine. Catalyzes the oxidation of choline to betaine aldehyde and betaine aldehyde to glycine betaine at the same rate. This chain is Oxygen-dependent choline dehydrogenase, found in Pseudomonas aeruginosa (strain UCBPP-PA14).